Consider the following 207-residue polypeptide: MPKVAIYNVSGQQVSEIELSENVFGVEVNEHAMYEVVKNQLANRRQGTQSAKTRAEVRGGGRKPWKQKGTGRARVGSIRSPLWVGGGIVFAPKPRDYSYTIPKKVRRLALKSALTSKVNSNELIVLDELKLDAPKTKEMVNILKNLNVDKKALIVMGEKSEAVIKSANNIQGVQTALVNTINVYDILKYDKLIITKDAVQKVEEVYA.

A disordered region spans residues 44–71 (RRQGTQSAKTRAEVRGGGRKPWKQKGTG). Positions 60-71 (GGRKPWKQKGTG) are enriched in basic residues.

This sequence belongs to the universal ribosomal protein uL4 family. Part of the 50S ribosomal subunit.

Functionally, one of the primary rRNA binding proteins, this protein initially binds near the 5'-end of the 23S rRNA. It is important during the early stages of 50S assembly. It makes multiple contacts with different domains of the 23S rRNA in the assembled 50S subunit and ribosome. In terms of biological role, forms part of the polypeptide exit tunnel. The sequence is that of Large ribosomal subunit protein uL4 from Alkaliphilus oremlandii (strain OhILAs) (Clostridium oremlandii (strain OhILAs)).